Consider the following 330-residue polypeptide: B3 domain-containing protein REM21 (330 aa).

The segment at residues 23 to 116 (PRFFTVFLSH…SYEVSIYGRG (94 aa)) is a DNA-binding region (TF-B3). Positions 129-138 (EISDDTEDDN) are enriched in acidic residues. The segment at 129–169 (EISDDTEDDNVSLHSPSNVSLDSLSNDSHHSTSNVSLRSLS) is disordered. Residues 142 to 162 (HSPSNVSLDSLSNDSHHSTSN) show a composition bias toward low complexity.

The protein resides in the nucleus. The polypeptide is B3 domain-containing protein REM21 (REM21) (Arabidopsis thaliana (Mouse-ear cress)).